Consider the following 347-residue polypeptide: Uroporphyrinogen decarboxylase (347 aa).

Substrate contacts are provided by residues 23 to 27 (RQAGR), Asp73, Tyr150, Thr205, and His323.

It belongs to the uroporphyrinogen decarboxylase family. As to quaternary structure, homodimer.

It is found in the cytoplasm. The enzyme catalyses uroporphyrinogen III + 4 H(+) = coproporphyrinogen III + 4 CO2. The protein operates within porphyrin-containing compound metabolism; protoporphyrin-IX biosynthesis; coproporphyrinogen-III from 5-aminolevulinate: step 4/4. In terms of biological role, catalyzes the decarboxylation of four acetate groups of uroporphyrinogen-III to yield coproporphyrinogen-III. The polypeptide is Uroporphyrinogen decarboxylase (Ruthia magnifica subsp. Calyptogena magnifica).